Here is a 398-residue protein sequence, read N- to C-terminus: Secreted aspartic protease 2 (398 aa).

The first 18 residues, 1–18 (MFLKNIFIALAIALLVDA), serve as a signal peptide directing secretion. A propeptide spans 19–56 (TPTTTKRSAGFVALDFSVVKTPKAFPVTNGQEGKTSKR) (activation peptide). The Peptidase A1 domain maps to 70-384 (YAADITVGSN…DLDDNEISLA (315 aa)). D88 is a catalytic residue. 88-90 (DTG) contacts pepstatin A. C103 and C115 are oxidised to a cystine. Position 141–142 (141–142 (GD)) interacts with pepstatin A. Residues D247 and D270 each coordinate Zn(2+). The active site involves D274. 274-278 (DSGTT) serves as a coordination point for pepstatin A. C312 and C350 are disulfide-bonded. 2 N-linked (GlcNAc...) asparagine glycosylation sites follow: N313 and N321.

This sequence belongs to the peptidase A1 family. In terms of assembly, monomer.

Its subcellular location is the secreted. It catalyses the reaction Preferential cleavage at the carboxyl of hydrophobic amino acids, but fails to cleave 15-Leu-|-Tyr-16, 16-Tyr-|-Leu-17 and 24-Phe-|-Phe-25 of insulin B chain. Activates trypsinogen, and degrades keratin.. Functionally, secreted aspartic peptidases (SAPs) are a group of ten acidic hydrolases considered as key virulence factors. These enzymes supply the fungus with nutrient amino acids as well as are able to degrade the selected host's proteins involved in the immune defense. Induces host inflammatory cytokine production in a proteolytic activity-independent way. Plays a role in tissue damage during superficial infection. Moreover, acts toward human hemoglobin though limited proteolysis to generate a variety of antimicrobial hemocidins, enabling to compete with the other microorganisms of the same physiological niche using the microbicidal peptides generated from the host protein. Plays a key role in defense against host by cleaving histatin-5 (Hst 5), a peptide from human saliva that carries out fungicidal activity. The cleavage rate decreases in an order of SAP2 &gt; SAP9 &gt; SAP3 &gt; SAP7 &gt; SAP4 &gt; SAP1 &gt; SAP8. The first cleavage occurs between residues 'Lys-17' and 'His-18' of Hst 5, giving DSHAKRHHGYKRKFHEK and HHSHRGY peptides. Simultaneously, the DSHAKRHHGYKRK peptide is also formed. Further fragmentation by SAP2 results in FHEK and DSHAKRHHGY products. This Candida albicans (Yeast) protein is Secreted aspartic protease 2.